Consider the following 213-residue polypeptide: Protein-L-isoaspartate O-methyltransferase (213 aa).

The active site involves serine 61.

It belongs to the methyltransferase superfamily. L-isoaspartyl/D-aspartyl protein methyltransferase family.

The protein localises to the cytoplasm. The catalysed reaction is [protein]-L-isoaspartate + S-adenosyl-L-methionine = [protein]-L-isoaspartate alpha-methyl ester + S-adenosyl-L-homocysteine. In terms of biological role, catalyzes the methyl esterification of L-isoaspartyl residues in peptides and proteins that result from spontaneous decomposition of normal L-aspartyl and L-asparaginyl residues. It plays a role in the repair and/or degradation of damaged proteins. The polypeptide is Protein-L-isoaspartate O-methyltransferase (Maricaulis maris (strain MCS10) (Caulobacter maris)).